The primary structure comprises 78 residues: Antimicrobial peptide marcin-18 (78 aa).

An N-terminal signal peptide occupies residues 1-23; sequence MQFKKQLMVIFLAYFLVVNESEA. Arginine amide is present on R41. Positions 42–78 are excised as a propeptide; the sequence is RKNQRSRSIMKRDLENLFDPYQRNLELDRLLKQLPNY.

This sequence belongs to the non-disulfide-bridged peptide (NDBP) superfamily. Medium-length antimicrobial peptide (group 3) family. In terms of tissue distribution, expressed by the venom gland.

It is found in the secreted. The protein localises to the target cell membrane. In terms of biological role, antimicrobial peptide with potent activity against bacteria. Acts by fastly disrupting the bacterial membrane. Shows activity against Gram-positive bacteria S.aureus (MIC=1.5-2.9 uM) and S.epidermidis (MIC=2.9 uM), M.luteus (MIC=23.4 uM), B.thuringiensis (MIC=2.9 uM), B.subtilis (MIC=2.9 uM) and Gram-negative bacteria E.coli (MIC=5.9-11.7 uM) and P.aeruginosa (MIC=5.9 uM), as well as against penicillin (MIC=2.9 uM) and methicillin (MIC=1.5-2.9 uM) resistant bacteria. Antibiotic activity is not affected by major negatively charged components of the prokaryotic cell wall (e.g. lipopolysaccharides and lipoteichoic acid). In vivo, in a mouse model of lethal peritonitis, shows potent antibiotic activity without cytotoxicity, improving the survival rate. The sequence is that of Antimicrobial peptide marcin-18 from Olivierus martensii (Manchurian scorpion).